Consider the following 642-residue polypeptide: DNA primase (642 aa).

The CHC2-type zinc finger occupies 41-65 (CPFHNEKSPSFHVRPNHGHFHCFGC). The Toprim domain occupies 262–348 (HQAVVVEGYT…AGKSFVAVAA (87 aa)). Residues Glu268, Asp319, and Asp321 each coordinate Mg(2+). Residues 445–480 (NRRSVPERTRRRSVSVEQSPFMQPPGAPADQLAARP) are disordered.

It belongs to the DnaG primase family. Monomer. Interacts with DnaB. It depends on Zn(2+) as a cofactor. The cofactor is Mg(2+).

It catalyses the reaction ssDNA + n NTP = ssDNA/pppN(pN)n-1 hybrid + (n-1) diphosphate.. In terms of biological role, RNA polymerase that catalyzes the synthesis of short RNA molecules used as primers for DNA polymerase during DNA replication. The polypeptide is DNA primase (Mycobacterium leprae (strain TN)).